We begin with the raw amino-acid sequence, 202 residues long: Urease accessory protein UreG (202 aa).

10 to 17 is a binding site for GTP; the sequence is GPVGSGKT.

The protein belongs to the SIMIBI class G3E GTPase family. UreG subfamily. Homodimer. UreD, UreF and UreG form a complex that acts as a GTP-hydrolysis-dependent molecular chaperone, activating the urease apoprotein by helping to assemble the nickel containing metallocenter of UreC. The UreE protein probably delivers the nickel.

The protein resides in the cytoplasm. In terms of biological role, facilitates the functional incorporation of the urease nickel metallocenter. This process requires GTP hydrolysis, probably effectuated by UreG. This is Urease accessory protein UreG from Synechococcus sp. (strain JA-3-3Ab) (Cyanobacteria bacterium Yellowstone A-Prime).